Reading from the N-terminus, the 205-residue chain is MQAPPSFYEGDTLEVAKKLLGQKLVHIVDGIKRSGIIVEVEAYKGPGDKAAHSYGGRRTDRTEVMFGAPGHAYVYLIYGMYHCFNVITAPVGTPQGVLIRALEPVDGIEEIKLARYNKTDITKAQYKNLTNGPGKLCRALGITLEERGVSLQSDTLHIELVPEEEHISSQYKITAGPRINIDYAEEAVHYPWRFYYEGHPFVSKK.

It belongs to the DNA glycosylase MPG family.

This chain is Putative 3-methyladenine DNA glycosylase, found in Bacillus cereus (strain Q1).